The primary structure comprises 686 residues: tRNA wybutosine-synthesizing protein 4 (686 aa).

Over residues 1–10 the composition is skewed to basic and acidic residues; it reads MGPRSRERRA. The interval 1 to 21 is disordered; the sequence is MGPRSRERRAGAVQNTNDSSA. S-adenosyl-L-methionine contacts are provided by residues arginine 59, glycine 89, aspartate 114, 161 to 162, and glutamate 188; that span reads DL.

It belongs to the methyltransferase superfamily. LCMT family. As to quaternary structure, interacts with RNF144B/IBRDC2.

The enzyme catalyses 7-[(3S)-3-amino-3-carboxypropyl]wyosine(37) in tRNA(Phe) + S-adenosyl-L-methionine = 7-[(3S)-(3-amino-3-methoxycarbonyl)propyl]wyosine(37) in tRNA(Phe) + S-adenosyl-L-homocysteine. It catalyses the reaction 7-[(3S)-(3-amino-3-methoxycarbonyl)propyl]wyosine(37) in tRNA(Phe) + S-adenosyl-L-methionine + CO2 = wybutosine(37) in tRNA(Phe) + S-adenosyl-L-homocysteine + 2 H(+). It functions in the pathway tRNA modification; wybutosine-tRNA(Phe) biosynthesis. Probable S-adenosyl-L-methionine-dependent methyltransferase that acts as a component of the wybutosine biosynthesis pathway. Wybutosine is a hyper modified guanosine with a tricyclic base found at the 3'-position adjacent to the anticodon of eukaryotic phenylalanine tRNA. May methylate the carboxyl group of leucine residues to form alpha-leucine ester residues. This Homo sapiens (Human) protein is tRNA wybutosine-synthesizing protein 4 (LCMT2).